Reading from the N-terminus, the 99-residue chain is uncharacterized protein (99 aa).

The helical transmembrane segment at 74-90 threads the bilayer; it reads FLSLPLGHSYLFLFCFW.

The protein resides in the membrane. This is an uncharacterized protein from Saccharomyces cerevisiae (strain ATCC 204508 / S288c) (Baker's yeast).